The following is a 307-amino-acid chain: Bidirectional sugar transporter SWEET11 (307 aa).

The Extracellular segment spans residues 1–14 (MAGGFLSMANPAVT). Residues 15 to 35 (LSGVAGNIISFLVFLAPVATF) form a helical membrane-spanning segment. One can recognise a MtN3/slv 1 domain in the interval 17–100 (GVAGNIISFL…VLYLVYAPRR (84 aa)). Residues 36–47 (LQVYKKKSTGGY) are Cytoplasmic-facing. A helical transmembrane segment spans residues 48 to 68 (SSVPYVVALFSSVLWIFYALV). Residues 69–74 (KTNSRP) lie on the Extracellular side of the membrane. Residues 75–95 (LLTINAFGCGVEAAYIVLYLV) form a helical membrane-spanning segment. Residues 96 to 107 (YAPRRARLRTLA) lie on the Cytoplasmic side of the membrane. The chain crosses the membrane as a helical span at residues 108–128 (FFLLLDVAAFALIVVTTLYLV). Residues 129–135 (PKPHQVK) are Extracellular-facing. The helical transmembrane segment at 136-156 (FLGSVCLAFSMAVFVAPLSII) threads the bilayer. The region spanning 136–219 (FLGSVCLAFS…MGLYFWYRKP (84 aa)) is the MtN3/slv 2 domain. The Cytoplasmic portion of the chain corresponds to 157-168 (FKVIKTKSVEFM). A helical membrane pass occupies residues 169–189 (PIGLSVCLTLSAVAWFCYGLF). Residues 190–194 (TKDPY) are Extracellular-facing. The chain crosses the membrane as a helical span at residues 195–215 (VMYPNVGGFFFSCVQMGLYFW). Topologically, residues 216 to 307 (YRKPRNTAVL…PEVIEITAAV (92 aa)) are cytoplasmic.

It belongs to the SWEET sugar transporter family. As to quaternary structure, interacts with COPT1 and COPT2. Interacts with APX8. As to expression, mostly expressed in panicles and anthers. Also detected in leaves (leaf collar, leaf auricle, leaf ligule), roots, sheaths, culms and culm nodes.

It is found in the cell membrane. Its function is as follows. Mediates both low-affinity uptake and efflux of sugar across the plasma membrane. Required for pollen viability. Involved in the transport of copper, in cooperation with COPT1 and COPT2. Functionally, confers sensitivity to bacterial blight mediated by X.oryzae pv. oryzae (Xoo) in its Xa13 allelic form (e.g. cv. IR24), probably by providing the sugar required for the pathogen growth, or by reducing copper contents in xylem. However, a recessive resistance can be associated with the xa13 allele (in which the promoter is mutated leading to reduced induction upon pathogen infection, e.g. cv. IRBB13), specifically toward Xoo Philippine race 6 and Indian race PXO8. In Oryza sativa subsp. japonica (Rice), this protein is Bidirectional sugar transporter SWEET11 (SWEET11).